Here is a 432-residue protein sequence, read N- to C-terminus: Glutamate-1-semialdehyde 2,1-aminomutase (432 aa).

Lys-269 is subject to N6-(pyridoxal phosphate)lysine.

It belongs to the class-III pyridoxal-phosphate-dependent aminotransferase family. HemL subfamily. Homodimer. It depends on pyridoxal 5'-phosphate as a cofactor.

Its subcellular location is the cytoplasm. The enzyme catalyses (S)-4-amino-5-oxopentanoate = 5-aminolevulinate. It participates in porphyrin-containing compound metabolism; protoporphyrin-IX biosynthesis; 5-aminolevulinate from L-glutamyl-tRNA(Glu): step 2/2. The protein operates within porphyrin-containing compound metabolism; chlorophyll biosynthesis. The protein is Glutamate-1-semialdehyde 2,1-aminomutase of Chloroherpeton thalassium (strain ATCC 35110 / GB-78).